The following is a 192-amino-acid chain: MYVVFEGIDCVGKSTQISLLKEIYKDAIFTLEPGGTELGKHLREILLNKTHPISKRAELLLFLADRAQHFEEILKTNQNKLIISDRSFISGMAYAKDFENDLLFTLNSFALEDFFPQKIIFLKGDENLIQERLSQKELDSIEKRGIEYFLSVQDKLKKVLHFLKEKISIEILTLDAKESKEKLHQQIKEFLQ.

An ATP-binding site is contributed by 7–14; the sequence is GIDCVGKS.

Belongs to the thymidylate kinase family.

It carries out the reaction dTMP + ATP = dTDP + ADP. In terms of biological role, phosphorylation of dTMP to form dTDP in both de novo and salvage pathways of dTTP synthesis. The sequence is that of Thymidylate kinase from Campylobacter jejuni subsp. doylei (strain ATCC BAA-1458 / RM4099 / 269.97).